The sequence spans 494 residues: Catalase A (494 aa).

Residues Met1–Thr23 are compositionally biased toward polar residues. A disordered region spans residues Met1–Gly25. Active-site residues include His55 and Asn127. Tyr337 is a heme binding site.

Belongs to the catalase family. Requires heme as cofactor.

The protein resides in the periplasm. It carries out the reaction 2 H2O2 = O2 + 2 H2O. Its function is as follows. Decomposes hydrogen peroxide into water and oxygen; serves to protect cells from the toxic effects of hydrogen peroxide. The protein is Catalase A (katA) of Rhizobium meliloti (strain 1021) (Ensifer meliloti).